Consider the following 317-residue polypeptide: uncharacterized protein (317 aa).

It to M.avium MAV169.

This is an uncharacterized protein from Mycobacterium tuberculosis (strain CDC 1551 / Oshkosh).